The chain runs to 817 residues: Kinesin-like protein 2 (817 aa).

A disordered region spans residues 1-155 (MEEEGHKSLT…YNDEKSVNAS (155 aa)). The span at 8–23 (SLTSHLPQSSSSLSQS) shows a compositional bias: low complexity. The span at 39–60 (IKTNSSSSNILKPRLSLQNEVN) shows a compositional bias: polar residues. A compositionally biased stretch (low complexity) spans 76–86 (SLASVKSSSLA). A compositionally biased stretch (polar residues) spans 106–116 (PISSRSVSASS). The span at 122 to 132 (ASAVSSSLNSS) shows a compositional bias: low complexity. A coiled-coil region spans residues 155–242 (SALRTTEDRL…VSQKGMESLE (88 aa)). ATP contacts are provided by Asn473, Arg475, Arg479, Glu543, Gly566, Ser567, Gly568, Lys569, Thr570, and Thr778. The Kinesin motor domain occupies 473 to 807 (NIRVFCRVRP…LRFATKVNNT (335 aa)).

This sequence belongs to the TRAFAC class myosin-kinesin ATPase superfamily. Kinesin family. NCD subfamily.

The protein localises to the cytoplasm. The protein resides in the cytoskeleton. It is found in the spindle. Its subcellular location is the nucleus. It catalyses the reaction ATP + H2O = ADP + phosphate + H(+). The catalysed reaction is ATP + H2O + a kinesin associated with a microtubule at position (n) = ADP + phosphate + a kinesin associated with a microtubule at position (n-1, toward the minus end).. Functionally, minus end-directed microtubule (MT) motor that is involved in spindle microtubule shortening, kinetochore capture, and polarization of cytoplasmic microtubules. During mitosis, promotes spindle microtubule shortening by depolymerization. During metaphase, involved in the recapture of kinetochores displaced from the spindle and their transport towards the spindle pole body; promotes transport both by microtubule end-on pulling and by lateral sliding along the side of the microtubule. During interphase, required for the polarization of cytoplasmic microtubules where it orients the microtubule plus ends toward the cell ends and the minus ends toward the cell center. Required for karyogamy. This is Kinesin-like protein 2 from Schizosaccharomyces pombe (strain 972 / ATCC 24843) (Fission yeast).